The chain runs to 261 residues: 5-oxoprolinase subunit A (261 aa).

The protein belongs to the LamB/PxpA family. As to quaternary structure, forms a complex composed of PxpA, PxpB and PxpC.

The enzyme catalyses 5-oxo-L-proline + ATP + 2 H2O = L-glutamate + ADP + phosphate + H(+). Functionally, catalyzes the cleavage of 5-oxoproline to form L-glutamate coupled to the hydrolysis of ATP to ADP and inorganic phosphate. The chain is 5-oxoprolinase subunit A from Symbiobacterium thermophilum (strain DSM 24528 / JCM 14929 / IAM 14863 / T).